The sequence spans 151 residues: Ribosome maturation factor RimP (151 aa).

It belongs to the RimP family.

The protein resides in the cytoplasm. Functionally, required for maturation of 30S ribosomal subunits. This Shewanella sediminis (strain HAW-EB3) protein is Ribosome maturation factor RimP.